A 366-amino-acid chain; its full sequence is Pyruvate dehydrogenase E1 component subunit beta, mitochondrial (366 aa).

A mitochondrion-targeting transit peptide spans methionine 1–phenylalanine 33. Thiamine diphosphate is bound at residue glutamate 95. Residues alanine 196, isoleucine 197, aspartate 199, and asparagine 201 each contribute to the K(+) site.

In terms of assembly, pyruvate dehydrogenase (E1) is a tetramer of 2 alpha and 2 beta subunits. Eukaryotic pyruvate dehydrogenase (PDH) complexes are organized as a core consisting of the oligomeric dihydrolipoamide acetyl-transferase (E2), around which are arranged multiple copies of pyruvate dehydrogenase (E1), dihydrolipoamide dehydrogenase (E3) and protein X (E3BP) bound by non-covalent bonds. Requires thiamine diphosphate as cofactor.

It is found in the mitochondrion matrix. It catalyses the reaction N(6)-[(R)-lipoyl]-L-lysyl-[protein] + pyruvate + H(+) = N(6)-[(R)-S(8)-acetyldihydrolipoyl]-L-lysyl-[protein] + CO2. Functionally, the pyruvate dehydrogenase complex catalyzes the overall conversion of pyruvate to acetyl-CoA and CO(2). This Saccharomyces cerevisiae (strain ATCC 204508 / S288c) (Baker's yeast) protein is Pyruvate dehydrogenase E1 component subunit beta, mitochondrial (PDB1).